Consider the following 134-residue polypeptide: Transcription antitermination protein NusB (134 aa).

Belongs to the NusB family.

Functionally, involved in transcription antitermination. Required for transcription of ribosomal RNA (rRNA) genes. Binds specifically to the boxA antiterminator sequence of the ribosomal RNA (rrn) operons. The sequence is that of Transcription antitermination protein NusB from Halalkalibacterium halodurans (strain ATCC BAA-125 / DSM 18197 / FERM 7344 / JCM 9153 / C-125) (Bacillus halodurans).